The chain runs to 748 residues: Wings apart-like protein homolog 1 (748 aa).

2 disordered regions span residues 23-199 (TLAQ…VYAT) and 614-644 (EGGCGDEEEEEEGGDESSDEDGVRKDGRLDR). The span at 35–64 (PSVRSSDSPDVPDTPDVPVNQLSSPPLSLP) shows a compositional bias: low complexity. 2 stretches are compositionally biased toward polar residues: residues 68–79 (SEGNAETLQNLS) and 87–96 (LSQSSTSSLN). The segment covering 172–182 (ISSSSNRYSSR) has biased composition (low complexity). Positions 205 to 723 (KPLASGYGSR…KRLYDFTKAT (519 aa)) constitute a WAPL domain. Over residues 616 to 633 (GCGDEEEEEEGGDESSDE) the composition is skewed to acidic residues. The span at 634-644 (DGVRKDGRLDR) shows a compositional bias: basic and acidic residues.

Belongs to the WAPL family.

The protein localises to the nucleus. Its function is as follows. Regulator of meiotic chromosome structure and function, playing a role in sister chromatid cohesion, possibly via antagonizing the coh-3/-4 association with axial elements in nuclei during late prophase, cohesin association with chromatin, DNA double strand break repair and polar body positioning following meiotic divisions during oogenesis. Regulates the morphogenesis and temporal assembly of axial elements to control the organization of meiotic chromosomes in pachytene nuclei and is also involved in meiotic chromosomal remodeling in late pachytene nuclei. Required for the removal of the cohesin component scc-1 from mitotic chromosomes. The protein is Wings apart-like protein homolog 1 of Caenorhabditis elegans.